We begin with the raw amino-acid sequence, 209 residues long: Imidazole glycerol phosphate synthase subunit HisH (209 aa).

In terms of domain architecture, Glutamine amidotransferase type-1 spans 1 to 205 (MIAIIDYGMG…KGVVETWKSS (205 aa)). Cysteine 79 acts as the Nucleophile in catalysis. Active-site residues include histidine 180 and glutamate 182.

Heterodimer of HisH and HisF.

The protein localises to the cytoplasm. The catalysed reaction is 5-[(5-phospho-1-deoxy-D-ribulos-1-ylimino)methylamino]-1-(5-phospho-beta-D-ribosyl)imidazole-4-carboxamide + L-glutamine = D-erythro-1-(imidazol-4-yl)glycerol 3-phosphate + 5-amino-1-(5-phospho-beta-D-ribosyl)imidazole-4-carboxamide + L-glutamate + H(+). It catalyses the reaction L-glutamine + H2O = L-glutamate + NH4(+). The protein operates within amino-acid biosynthesis; L-histidine biosynthesis; L-histidine from 5-phospho-alpha-D-ribose 1-diphosphate: step 5/9. Functionally, IGPS catalyzes the conversion of PRFAR and glutamine to IGP, AICAR and glutamate. The HisH subunit catalyzes the hydrolysis of glutamine to glutamate and ammonia as part of the synthesis of IGP and AICAR. The resulting ammonia molecule is channeled to the active site of HisF. This Bacillus cereus (strain AH187) protein is Imidazole glycerol phosphate synthase subunit HisH.